The sequence spans 198 residues: Heat shock 70 kDa protein (198 aa).

A compositionally biased stretch (gly residues) spans 170 to 191; the sequence is GGGVPSGMPGGMPGAGGGGGKG. Residues 170-198 form a disordered region; that stretch reads GGGVPSGMPGGMPGAGGGGGKGPTIEEVD.

It belongs to the heat shock protein 70 family.

The polypeptide is Heat shock 70 kDa protein (Schistosoma japonicum (Blood fluke)).